Consider the following 346-residue polypeptide: Small ribosomal subunit biogenesis GTPase RsgA 1 (346 aa).

Positions 93-248 (AEQLIAANFD…VIDTPGMREF (156 aa)) constitute a CP-type G domain. Residues 138 to 141 (TKAD) and 190 to 198 (GSSGVGKSS) each bind GTP. Residues Cys-271, Cys-276, His-278, and Cys-284 each contribute to the Zn(2+) site.

It belongs to the TRAFAC class YlqF/YawG GTPase family. RsgA subfamily. As to quaternary structure, monomer. Associates with 30S ribosomal subunit, binds 16S rRNA. The cofactor is Zn(2+).

It localises to the cytoplasm. Its function is as follows. One of several proteins that assist in the late maturation steps of the functional core of the 30S ribosomal subunit. Helps release RbfA from mature subunits. May play a role in the assembly of ribosomal proteins into the subunit. Circularly permuted GTPase that catalyzes slow GTP hydrolysis, GTPase activity is stimulated by the 30S ribosomal subunit. The sequence is that of Small ribosomal subunit biogenesis GTPase RsgA 1 from Listeria monocytogenes serovar 1/2a (strain ATCC BAA-679 / EGD-e).